The primary structure comprises 167 residues: Crossover junction endodeoxyribonuclease RuvC (167 aa).

Catalysis depends on residues aspartate 8, glutamate 67, and aspartate 139. Aspartate 8, glutamate 67, and aspartate 139 together coordinate Mg(2+).

It belongs to the RuvC family. As to quaternary structure, homodimer which binds Holliday junction (HJ) DNA. The HJ becomes 2-fold symmetrical on binding to RuvC with unstacked arms; it has a different conformation from HJ DNA in complex with RuvA. In the full resolvosome a probable DNA-RuvA(4)-RuvB(12)-RuvC(2) complex forms which resolves the HJ. Mg(2+) serves as cofactor.

The protein resides in the cytoplasm. It catalyses the reaction Endonucleolytic cleavage at a junction such as a reciprocal single-stranded crossover between two homologous DNA duplexes (Holliday junction).. In terms of biological role, the RuvA-RuvB-RuvC complex processes Holliday junction (HJ) DNA during genetic recombination and DNA repair. Endonuclease that resolves HJ intermediates. Cleaves cruciform DNA by making single-stranded nicks across the HJ at symmetrical positions within the homologous arms, yielding a 5'-phosphate and a 3'-hydroxyl group; requires a central core of homology in the junction. The consensus cleavage sequence is 5'-(A/T)TT(C/G)-3'. Cleavage occurs on the 3'-side of the TT dinucleotide at the point of strand exchange. HJ branch migration catalyzed by RuvA-RuvB allows RuvC to scan DNA until it finds its consensus sequence, where it cleaves and resolves the cruciform DNA. The chain is Crossover junction endodeoxyribonuclease RuvC from Halorhodospira halophila (strain DSM 244 / SL1) (Ectothiorhodospira halophila (strain DSM 244 / SL1)).